The following is a 510-amino-acid chain: MATSDQDRRHRVTRNRPPIARPSTSSSRPVVSPPRSKVSKRVLLRVASVACGIQFGWALQLSLLTPYVQELGIPHAWASVIWLCGPLSGLFVQPLVGHSSDRCTSKYGRRRPFIVAGAVAISISVMVIGHAADIGWAFGDREGKIKPRAIVAFVLGFWILDVANNMTQGPCRALLADLTENDNRRTRVANGYFSLFMAVGNVLGYATGSYNGWYKIFTFTKTVACNVECANLKSAFYIDVVFIAITTILSVSAAHEVPLASLASEAHGQTSGTDEAFLSEIFGTFRYFPGNVWIILLVTALTWIGWFPFILFDTDWMGREIYGGEPNIGTSYSAGVSMGALGLMLNSVFLGITSVLMEKLCRKWGAGFVWGISNILMAICFLGMIITSFVASHLGYIGHEQPPASIVFAAVLIFTILGIPLAITYSVPYALISIRIESLGLGQGLSLGVLNLAIVIPQVIVSVGSGPWDQLFGGGNSPALAVGAATGFIGGIVAILALPRTRIQKPIPLP.

The tract at residues 1–34 (MATSDQDRRHRVTRNRPPIARPSTSSSRPVVSPP) is disordered. Residues 1–45 (MATSDQDRRHRVTRNRPPIARPSTSSSRPVVSPPRSKVSKRVLLR) lie on the Cytoplasmic side of the membrane. Residues 21-34 (RPSTSSSRPVVSPP) show a composition bias toward low complexity. At Ser23 the chain carries Phosphoserine. The helical transmembrane segment at 46–66 (VASVACGIQFGWALQLSLLTP) threads the bilayer. At 67–71 (YVQEL) the chain is on the extracellular side. Residues 72–92 (GIPHAWASVIWLCGPLSGLFV) traverse the membrane as a helical segment. The Cytoplasmic segment spans residues 93-111 (QPLVGHSSDRCTSKYGRRR). A helical transmembrane segment spans residues 112–132 (PFIVAGAVAISISVMVIGHAA). Over 133–148 (DIGWAFGDREGKIKPR) the chain is Extracellular. A helical membrane pass occupies residues 149 to 169 (AIVAFVLGFWILDVANNMTQG). Over 170–187 (PCRALLADLTENDNRRTR) the chain is Cytoplasmic. A helical transmembrane segment spans residues 188 to 208 (VANGYFSLFMAVGNVLGYATG). Residues 209–233 (SYNGWYKIFTFTKTVACNVECANLK) lie on the Extracellular side of the membrane. The helical transmembrane segment at 234–254 (SAFYIDVVFIAITTILSVSAA) threads the bilayer. Over 255–291 (HEVPLASLASEAHGQTSGTDEAFLSEIFGTFRYFPGN) the chain is Cytoplasmic. A helical transmembrane segment spans residues 292–312 (VWIILLVTALTWIGWFPFILF). Over 313-335 (DTDWMGREIYGGEPNIGTSYSAG) the chain is Extracellular. Residues 336–356 (VSMGALGLMLNSVFLGITSVL) form a helical membrane-spanning segment. Residues 357-365 (MEKLCRKWG) are Cytoplasmic-facing. The helical transmembrane segment at 366–386 (AGFVWGISNILMAICFLGMII) threads the bilayer. Residues 387 to 402 (TSFVASHLGYIGHEQP) are Extracellular-facing. The chain crosses the membrane as a helical span at residues 403–423 (PASIVFAAVLIFTILGIPLAI). Residues 424-443 (TYSVPYALISIRIESLGLGQ) are Cytoplasmic-facing. Residues 444-464 (GLSLGVLNLAIVIPQVIVSVG) traverse the membrane as a helical segment. Residues 465 to 477 (SGPWDQLFGGGNS) lie on the Extracellular side of the membrane. The chain crosses the membrane as a helical span at residues 478–498 (PALAVGAATGFIGGIVAILAL). At 499 to 510 (PRTRIQKPIPLP) the chain is on the cytoplasmic side.

The protein belongs to the glycoside-pentoside-hexuronide (GPH) cation symporter transporter (TC 2.A.2.4) family. In terms of assembly, homodimer. Interacts with SUC2 and SUC3. Expressed in sink tissues, mostly in minor veins of sink leaves. Localized in companion cells.

The protein localises to the cell membrane. It catalyses the reaction sucrose(out) + H(+)(out) = sucrose(in) + H(+)(in). It functions in the pathway glycan biosynthesis; sucrose metabolism. Its function is as follows. Responsible for the transport of sucrose into the cell, with the concomitant uptake of protons (symport system). Can also transport maltose at a lesser rate. May also transport biotin. This Arabidopsis thaliana (Mouse-ear cress) protein is Sucrose transport protein SUC4.